Consider the following 176-residue polypeptide: Odorant-binding protein 2a (176 aa).

The first 19 residues, 1 to 19 (MKSLLLTILLLGLVAVLKA), serve as a signal peptide directing secretion. N-linked (GlcNAc...) asparagine glycosylation is found at Asn-42 and Asn-124. An intrachain disulfide couples Cys-79 to Cys-172.

The protein belongs to the calycin superfamily. Lipocalin family. As to expression, expressed in the liver (at protein level). Expressed in epididymis.

The protein localises to the secreted. Involved in the regulation of systematic glucose homeostasis and insulin sensitivity. Involved in the regulation of liver lipid levels by positive regulation of hepatic lipogenesis and negative regulation of fatty acid beta-oxidation; via downstream transcriptional regulation of CPT1A and hepatic lipogenic program gene expression. May regulate hepatic lipogenesis and fatty acid beta-oxidation in an autocrine or paracrine manner. This chain is Odorant-binding protein 2a (Obp2a), found in Mus musculus (Mouse).